Reading from the N-terminus, the 353-residue chain is 11-beta-hydroxysteroid dehydrogenase B (353 aa).

The helical; Signal-anchor for type II membrane protein transmembrane segment at 10–30 (LFVPPASLITLAFSWPALCFP) threads the bilayer. The Proline-knob signature appears at 13 to 26 (PPASLITLAFSWPA). Residues 54-80 (GASSGIGEQIAYEYALRRACLVLVARR) and Asp105 each bind NADP(+). Ser184 contacts substrate. Tyr197 (proton acceptor) is an active-site residue. NADP(+) contacts are provided by residues 197 to 201 (YAAAK) and Lys201.

The protein belongs to the short-chain dehydrogenases/reductases (SDR) family. As to expression, expressed in seeds (at protein level).

The protein localises to the lipid droplet. It localises to the membrane. The catalysed reaction is an 11beta-hydroxysteroid + NADP(+) = an 11-oxosteroid + NADPH + H(+). Has dehydrogenase activity against 11 beta-hydroxysteroid and 17 beta-hydroxysteroid. May be involved in signal transduction regulated by various sterols. This chain is 11-beta-hydroxysteroid dehydrogenase B, found in Arachis hypogaea (Peanut).